A 378-amino-acid polypeptide reads, in one-letter code: UPF0754 membrane protein Exig_0680 (378 aa).

2 helical membrane-spanning segments follow: residues 5–25 (VDLV…GAVT) and 357–377 (ITWL…ILLI).

Belongs to the UPF0754 family.

Its subcellular location is the cell membrane. This chain is UPF0754 membrane protein Exig_0680, found in Exiguobacterium sibiricum (strain DSM 17290 / CCUG 55495 / CIP 109462 / JCM 13490 / 255-15).